Here is a 142-residue protein sequence, read N- to C-terminus: ATP synthase epsilon chain (142 aa).

It belongs to the ATPase epsilon chain family. F-type ATPases have 2 components, CF(1) - the catalytic core - and CF(0) - the membrane proton channel. CF(1) has five subunits: alpha(3), beta(3), gamma(1), delta(1), epsilon(1). CF(0) has three main subunits: a, b and c.

It localises to the cell inner membrane. Functionally, produces ATP from ADP in the presence of a proton gradient across the membrane. This is ATP synthase epsilon chain from Actinobacillus succinogenes (strain ATCC 55618 / DSM 22257 / CCUG 43843 / 130Z).